We begin with the raw amino-acid sequence, 398 residues long: KTTAPSVYPLAPVCGDTTGSSVTLGCLVKGYFPEPVTLTWNSGSLSSGVHTFPAVLQSDLYTLSSSVTVTSSTWPSQSITCNVAHPASSTKVDKKIEPRGPTIKPCPPCKCPAPNLLGGPSVFIFPPKIKDVLMISLSPIVTCVVVDVSEDDPDVQISWFVNNVEVHTAQTQTHREDYNSTLRVVSALPIQHQDWMSGKEFKCKVNNKDLPAPIERTISKPKGSVRAPQVYVLPPPEEEMTKKQVTLTCMVTDFMPEDIYVEWTNNGKTELNYKNTEPVLDSDGSYFMYSKLRVEKKNWVERNSYSCSVVHEGLHNHHTTKSFSRTPGLDLDDVCAEAQDGELDGLWTTITIFISLFLLSVCYSASVTLFKVKWIFSSVVELKQTISPDYRNMIGQGA.

Ig-like domains are found at residues 5–97 (PSVY…KKIE), 120–219 (PSVF…RTIS), and 228–324 (PQVY…KSFS). Disulfide bonds link Cys26–Cys81, Cys143–Cys203, and Cys249–Cys307. Residue Asn179 is glycosylated (N-linked (GlcNAc...) asparagine). A helical transmembrane segment spans residues 345–362 (GLWTTITIFISLFLLSVC). The Cytoplasmic segment spans residues 363 to 398 (YSASVTLFKVKWIFSSVVELKQTISPDYRNMIGQGA).

The protein resides in the cell membrane. This chain is Immunoglobulin heavy constant gamma 2A, found in Mus musculus (Mouse).